The chain runs to 447 residues: Phosphoglucosamine mutase (447 aa).

The active-site Phosphoserine intermediate is serine 108. Residues serine 108, aspartate 247, aspartate 249, and aspartate 251 each contribute to the Mg(2+) site. The residue at position 108 (serine 108) is a Phosphoserine.

It belongs to the phosphohexose mutase family. Mg(2+) serves as cofactor. Activated by phosphorylation.

It catalyses the reaction alpha-D-glucosamine 1-phosphate = D-glucosamine 6-phosphate. In terms of biological role, catalyzes the conversion of glucosamine-6-phosphate to glucosamine-1-phosphate. This is Phosphoglucosamine mutase from Bordetella petrii (strain ATCC BAA-461 / DSM 12804 / CCUG 43448).